Consider the following 247-residue polypeptide: Probable transcriptional regulatory protein Tola_2714 (247 aa).

A disordered region spans residues M1–R21.

It belongs to the TACO1 family.

Its subcellular location is the cytoplasm. The protein is Probable transcriptional regulatory protein Tola_2714 of Tolumonas auensis (strain DSM 9187 / NBRC 110442 / TA 4).